We begin with the raw amino-acid sequence, 365 residues long: Transcription factor aptf-1 (365 aa).

Disordered stretches follow at residues 13–40 and 93–126; these read EFVR…PFYE and TPPQ…SNYS. The tract at residues 223–356 is H-S-H (helix-span-helix), dimerization; the sequence is RRKQANVTAW…MIDESIKYID (134 aa).

It belongs to the AP-2 family. As to quaternary structure, binds DNA as a dimer. Expressed in five interneurons AIB, RIB and RIS.

Its subcellular location is the nucleus. In terms of biological role, transcription factor, which is required in the single sleep-active ring interneuron RIS for sleep-like behavioral quiescence induced by neuropeptide signaling in larvae. Regulates gene expression of sleep-inducing FMRFamide-like neuropeptide flp-11 in RIS. The protein is Transcription factor aptf-1 of Caenorhabditis elegans.